The following is a 182-amino-acid chain: Bis(5'-nucleosyl)-tetraphosphatase [asymmetrical] (182 aa).

The 108-residue stretch at 3–110 (KQLYFSKFPV…IPRKKADFSE (108 aa)) folds into the HIT domain. Residues Asn28, Gln84, and 90-93 (GQTV) contribute to the substrate site. The Histidine triad motif motif lies at 95–99 (HVHVH). His97 (tele-AMP-histidine intermediate) is an active-site residue. His99 contacts substrate. Residues 135–161 (RYAGDERPPTSMRQAIPKDEDRKPRTL) are disordered. A compositionally biased stretch (basic and acidic residues) spans 150–161 (IPKDEDRKPRTL).

It catalyses the reaction P(1),P(4)-bis(5'-guanosyl) tetraphosphate + H2O = GMP + GTP + 2 H(+). Asymmetrically hydrolyzes Ap4A to yield AMP and ATP. This Schizosaccharomyces pombe (strain 972 / ATCC 24843) (Fission yeast) protein is Bis(5'-nucleosyl)-tetraphosphatase [asymmetrical] (aph1).